A 125-amino-acid chain; its full sequence is uncharacterized protein (125 aa).

A helical membrane pass occupies residues 7–29 (NCMFLYVYTDVCVRLCASIFYIM).

Its subcellular location is the membrane. This is an uncharacterized protein from Saccharomyces cerevisiae (strain ATCC 204508 / S288c) (Baker's yeast).